A 1481-amino-acid chain; its full sequence is Protein shortage in chiasmata 1 ortholog (1481 aa).

Disordered regions lie at residues 479–498 (TDVH…EKEV) and 512–560 (KSKV…IQAS). Over residues 513–531 (SKVEANPKNDQEPEARIMQ) the composition is skewed to basic and acidic residues. Over residues 543-560 (SSQVPSAESASSSQIQAS) the composition is skewed to low complexity.

The protein belongs to the XPF family. Highly divergent. In terms of assembly, interacts with TEX11. Interacts with SPO16. Mainly expressed in adult testis.

It is found in the chromosome. Its function is as follows. ATPase required during meiosis for the formation of crossover recombination intermediates. Binds DNA: preferentially binds to single-stranded DNA and DNA branched structures. Does not show nuclease activity in vitro, but shows ATPase activity, which is stimulated by the presence of single-stranded DNA. Plays a key role in homologous recombination and crossing-over in meiotic prophase I in male and female germ cells. Required for proper synaptonemal complex assembly and homologous chromosome pairing. Required for recruitment of TEX11 and MSH4 to recombination intermediates. This Mus musculus (Mouse) protein is Protein shortage in chiasmata 1 ortholog.